The sequence spans 150 residues: Large ribosomal subunit protein bL9 (150 aa).

The protein belongs to the bacterial ribosomal protein bL9 family.

Its function is as follows. Binds to the 23S rRNA. This chain is Large ribosomal subunit protein bL9, found in Photorhabdus laumondii subsp. laumondii (strain DSM 15139 / CIP 105565 / TT01) (Photorhabdus luminescens subsp. laumondii).